The sequence spans 316 residues: Probable 5-dehydro-4-deoxyglucarate dehydratase (316 aa).

The protein belongs to the DapA family.

The enzyme catalyses 5-dehydro-4-deoxy-D-glucarate + H(+) = 2,5-dioxopentanoate + CO2 + H2O. It functions in the pathway carbohydrate acid metabolism; D-glucarate degradation; 2,5-dioxopentanoate from D-glucarate: step 2/2. The polypeptide is Probable 5-dehydro-4-deoxyglucarate dehydratase (Corynebacterium glutamicum (strain ATCC 13032 / DSM 20300 / JCM 1318 / BCRC 11384 / CCUG 27702 / LMG 3730 / NBRC 12168 / NCIMB 10025 / NRRL B-2784 / 534)).